A 923-amino-acid polypeptide reads, in one-letter code: MGSGAGELGRAERLPVLFLFLLSLFCPALCEQIRYRIPEEMPKGSVVGNLATDLGFSVQELPTRKLRVSSEKPYFTVSAESGELLVSSRLDREEICGKKPACALEFEAVAENPLNFYHVNVEIEDINDHTPKFTQNSFELQISESAQPGTRFILEVAEDADIGLNSLQKYKLSLNPSFSLIIKEKQDGSKYPELALEKTLDREQQSYHRLVLTALDGGHPPLSGTTELRIQVTDANDNPPVFNRDVYRVSLRENVPPGTTVLQVSATDQDEGINSEITYSFYRTGQIFSLNSKSGEITTQKKLDFEETKEYSMVVEGRDGGGLVAQCTVEINIQDENDNSPEVTFHSLLEMILENAVPGTLIALIKIHDQDSGENGEVNCQLQGEVPFKIISSSKNSYKLVTDGTLDREQTPEYNVTITATDRGKPPLSSSISVILHIRDVNDNAPVFHQASYLVSVPENNPPGASIAQVCASDLDLGLNGQVSYSIMASDLEPLALASYVSMSAQSGVVFAQRAFDYEQLRTFELTLQARDQGSPALSANVSLRVLVGDRNDNAPRVLYPALGPDGSALFDMVPRAAEPGYLVTKVVAVDADSGHNAWLSYHVLQASEPGLFSLGLRTGEVRTARALGDRDAARQRLLVAVRDGGQPPLSATATLHLVFADSLQEVLPDITDRPVPSDPQAELQFYLVVALALISVLFLLAVILAVALRLRRSSSPAAWSCFQPGLCVKSGPVVPPNYSQGTLPYSYNLCVAHTGKTEFNFLKCSEQLSSGQDILCGDSSGALFPLCNSSESTSHPELQAPPNTDWRFSQAQRPGTSGSQNGDDTGTWPNNQFDTEMLQAMILASASEAADGSSTLGGGAGTMGLSARYGPQFTLQHVPDYRQNVYIPGSNATLTNAAGKRDGKAPAGGNGNKKKSGKKEKK.

The N-terminal stretch at 1–30 (MGSGAGELGRAERLPVLFLFLLSLFCPALC) is a signal peptide. 6 consecutive Cadherin domains span residues 31 to 133 (EQIR…TPKF), 134 to 242 (TQNS…PPVF), 243 to 343 (NRDV…SPEV), 344 to 448 (TFHS…APVF), 449 to 558 (HQAS…APRV), and 566 to 671 (DGSA…LPDI). At 31 to 687 (EQIRYRIPEE…SDPQAELQFY (657 aa)) the chain is on the extracellular side. N-linked (GlcNAc...) asparagine glycosylation is found at Asn-415 and Asn-541. A helical membrane pass occupies residues 688–708 (LVVALALISVLFLLAVILAVA). At 709–923 (LRLRRSSSPA…KKKSGKKEKK (215 aa)) the chain is on the cytoplasmic side. 2 disordered regions span residues 794-832 (TSHP…WPNN) and 893-923 (ATLT…KEKK). Residues 807 to 832 (WRFSQAQRPGTSGSQNGDDTGTWPNN) show a composition bias toward polar residues. The segment covering 913–923 (NKKKSGKKEKK) has biased composition (basic residues).

It localises to the cell membrane. Its function is as follows. Potential calcium-dependent cell-adhesion protein. May be involved in the establishment and maintenance of specific neuronal connections in the brain. The chain is Protocadherin gamma-B5 (PCDHGB5) from Homo sapiens (Human).